The chain runs to 137 residues: Insulin-like peptide 2 (137 aa).

The signal sequence occupies residues 1 to 26 (MSKPLSFISMVAVILLASSTVKLAQG). Intrachain disulfides connect cysteine 29–cysteine 119, cysteine 41–cysteine 132, and cysteine 118–cysteine 123. The propeptide at 53–104 (AMPGADSDLDALNPLQFVQEFEEEDNSISEPLRSALFPGSYLGGVLNSLAEV) is connecting peptide.

It belongs to the insulin family. As to quaternary structure, heterodimer of a B chain and an A chain linked by two disulfide bonds. Broadly expressed at a low level in the embryonic mesoderm, beginning at stage 12. Expressed at a high level in the embryonic anterior midgut, with expression diminishing at late stage 16. Expressed at a low level in larval imaginal disks. Expressed at a high level in larval salivary glands and in seven cells of each larval brain hemisphere that may correspond to neurosecretory cells.

It localises to the secreted. Its function is as follows. Possible ligand of InR/insulin-like receptor. Functionally, plays a role in regulating body size by increasing cell size and cell number of individual organs. Probably mediates its growth effects by acting as a ligand for the insulin receptor and transducing a signal via the Chico/PI3K/Akt(PKB) pathway. The sequence is that of Insulin-like peptide 2 from Drosophila melanogaster (Fruit fly).